The sequence spans 160 residues: SsrA-binding protein (160 aa).

This sequence belongs to the SmpB family.

The protein localises to the cytoplasm. In terms of biological role, required for rescue of stalled ribosomes mediated by trans-translation. Binds to transfer-messenger RNA (tmRNA), required for stable association of tmRNA with ribosomes. tmRNA and SmpB together mimic tRNA shape, replacing the anticodon stem-loop with SmpB. tmRNA is encoded by the ssrA gene; the 2 termini fold to resemble tRNA(Ala) and it encodes a 'tag peptide', a short internal open reading frame. During trans-translation Ala-aminoacylated tmRNA acts like a tRNA, entering the A-site of stalled ribosomes, displacing the stalled mRNA. The ribosome then switches to translate the ORF on the tmRNA; the nascent peptide is terminated with the 'tag peptide' encoded by the tmRNA and targeted for degradation. The ribosome is freed to recommence translation, which seems to be the essential function of trans-translation. The sequence is that of SsrA-binding protein from Actinobacillus succinogenes (strain ATCC 55618 / DSM 22257 / CCUG 43843 / 130Z).